Reading from the N-terminus, the 477-residue chain is 3-isopropylmalate dehydratase large subunit (477 aa).

Residues Cys358, Cys419, and Cys422 each coordinate [4Fe-4S] cluster.

The protein belongs to the aconitase/IPM isomerase family. LeuC type 1 subfamily. As to quaternary structure, heterodimer of LeuC and LeuD. The cofactor is [4Fe-4S] cluster.

The catalysed reaction is (2R,3S)-3-isopropylmalate = (2S)-2-isopropylmalate. Its pathway is amino-acid biosynthesis; L-leucine biosynthesis; L-leucine from 3-methyl-2-oxobutanoate: step 2/4. Catalyzes the isomerization between 2-isopropylmalate and 3-isopropylmalate, via the formation of 2-isopropylmaleate. This is 3-isopropylmalate dehydratase large subunit from Acinetobacter baylyi (strain ATCC 33305 / BD413 / ADP1).